Reading from the N-terminus, the 208-residue chain is Protein-L-isoaspartate O-methyltransferase (208 aa).

The active site involves Ser-59.

This sequence belongs to the methyltransferase superfamily. L-isoaspartyl/D-aspartyl protein methyltransferase family.

It is found in the cytoplasm. The catalysed reaction is [protein]-L-isoaspartate + S-adenosyl-L-methionine = [protein]-L-isoaspartate alpha-methyl ester + S-adenosyl-L-homocysteine. Its function is as follows. Catalyzes the methyl esterification of L-isoaspartyl residues in peptides and proteins that result from spontaneous decomposition of normal L-aspartyl and L-asparaginyl residues. It plays a role in the repair and/or degradation of damaged proteins. This chain is Protein-L-isoaspartate O-methyltransferase, found in Pectobacterium atrosepticum (strain SCRI 1043 / ATCC BAA-672) (Erwinia carotovora subsp. atroseptica).